The following is a 513-amino-acid chain: GMP synthase [glutamine-hydrolyzing] (513 aa).

Residues 7-197 (TILVLDFGGQ…LFGVCGCTGE (191 aa)) form the Glutamine amidotransferase type-1 domain. Residue Cys84 is the Nucleophile of the active site. Catalysis depends on residues His171 and Glu173. The GMPS ATP-PPase domain occupies 198-387 (WTMENFIEEQ…LGLPEDIVWR (190 aa)). Position 225–231 (225–231 (SGGVDSS)) interacts with ATP.

As to quaternary structure, homodimer.

The enzyme catalyses XMP + L-glutamine + ATP + H2O = GMP + L-glutamate + AMP + diphosphate + 2 H(+). It participates in purine metabolism; GMP biosynthesis; GMP from XMP (L-Gln route): step 1/1. Functionally, catalyzes the synthesis of GMP from XMP. The chain is GMP synthase [glutamine-hydrolyzing] from Heliobacterium modesticaldum (strain ATCC 51547 / Ice1).